The primary structure comprises 627 residues: Phosphomethylpyrimidine synthase (627 aa).

Positions 1 to 21 (MSVQSNKNLSESAQVDQQSIQ) are disordered. Substrate is bound by residues Asn-231, Met-260, Tyr-289, His-325, 345 to 347 (SRG), 386 to 389 (DGLR), and Glu-425. His-429 is a binding site for Zn(2+). Residue Tyr-452 coordinates substrate. Zn(2+) is bound at residue His-493. Residues Cys-573, Cys-576, and Cys-581 each contribute to the [4Fe-4S] cluster site.

This sequence belongs to the ThiC family. In terms of assembly, homodimer. The cofactor is [4Fe-4S] cluster.

The catalysed reaction is 5-amino-1-(5-phospho-beta-D-ribosyl)imidazole + S-adenosyl-L-methionine = 4-amino-2-methyl-5-(phosphooxymethyl)pyrimidine + CO + 5'-deoxyadenosine + formate + L-methionine + 3 H(+). It participates in cofactor biosynthesis; thiamine diphosphate biosynthesis. Functionally, catalyzes the synthesis of the hydroxymethylpyrimidine phosphate (HMP-P) moiety of thiamine from aminoimidazole ribotide (AIR) in a radical S-adenosyl-L-methionine (SAM)-dependent reaction. The polypeptide is Phosphomethylpyrimidine synthase (Stutzerimonas stutzeri (strain A1501) (Pseudomonas stutzeri)).